Reading from the N-terminus, the 282-residue chain is Bis(5'-nucleosyl)-tetraphosphatase, symmetrical (282 aa).

Belongs to the Ap4A hydrolase family.

The enzyme catalyses P(1),P(4)-bis(5'-adenosyl) tetraphosphate + H2O = 2 ADP + 2 H(+). In terms of biological role, hydrolyzes diadenosine 5',5'''-P1,P4-tetraphosphate to yield ADP. The sequence is that of Bis(5'-nucleosyl)-tetraphosphatase, symmetrical from Salmonella arizonae (strain ATCC BAA-731 / CDC346-86 / RSK2980).